The primary structure comprises 232 residues: Oxidoreductase 1 (232 aa).

It belongs to the MQO family. Requires FAD as cofactor.

Functionally, oxidoreductase; part of the gene cluster that mediates the biosynthesis of elsinochromes, pigments consisting of at least four interconvertible tautomers (A, B, C and D) that have a core phenolic quinone to which various side chains are attached and which play an important role in fungal pathogenesis. The non-reducing polyketide synthase PKS1 was proposed to iteratively catalyze decarboxylation between acetyl-CoA and malonyl-CoA subunits for polyketide chain elongation. The released polyketide undergoes cyclization to form an aromatic ring, and proceeds via serial modification steps to produce the heptaketide back- bone of elsinochrome. As elsinochrome has a symmetrical structure, two identical heptaketides are fused to form a core 1,2-dihydrobenzo-perylene ring structure, which can then be successively modified to produce the various derivatives of elsinochrome. Some of these reactions may be cooperatively carried out, at least in part, by the products of RDT1, OXR1 and PKS1. PRF1, embedded within the elsinochrome cluster possibly functions to stabilize some of the biosynthetic enzymes required for elsinochrome production. As prefoldin is a hexamer containing 2 a and 4 b subunits, additional prefoldin subunits, whose coding genes may not immediately link to the elsinochrome biosynthetic gene cluster, are required to fulfill the chaperone function. In addition, no methyltransferase-coding gene exists within the biosynthetic gene cluster, even though elsinochrome has four methyl groups at positions C3, C7, C8 and C12. Apparently, the identified gene cluster does not contain the entire entourage of genes responsible for elsinochrome biosynthesis. Once elsinochrome is synthesized, it must be exported outside the fungal cells, which is probably accomplished by the ECT1 transporter, to avoid toxicity. The protein is Oxidoreductase 1 of Elsinoe fawcettii (Citrus scab fungus).